The following is a 390-amino-acid chain: MVERVILIVLDSVGAGEMPDADKYGDKGSDTIGNISKAVGGLKLPDMVKMGLGNISGIKGVDKVQYPIGAFGKLKEMSKGKDTVTGHWEMSGVILEEPLNTYPNGFPKDIIDEFEKKIGRKVIGNKVASGTEIIKELGDEHIKTGCPIVYTSADSVFQVAAHEEIIPLDELYKICKVAREMLVDDRTVGRVIARPFVGKNSNYTRTSNRRDFALDPFNKTMLEYIKENKSNVMCVGKIEDIFNKKGVTEAVHIKNNMDGVDKTLEYMKTDKKGLIFTNLVDFDMLYGHRNDPKGYAKALEEFDGRINEIKTNMKDYDVLMITADHGCDPTTESTDHSREYIPFIAYGKDIKGGADIKIRDSFSDIGKTILDLLQVENNLVGKSFKDIIMK.

Positions 11, 283, 288, 324, 325, and 336 each coordinate Mn(2+).

It belongs to the phosphopentomutase family. Requires Mn(2+) as cofactor.

The protein resides in the cytoplasm. It catalyses the reaction 2-deoxy-alpha-D-ribose 1-phosphate = 2-deoxy-D-ribose 5-phosphate. The enzyme catalyses alpha-D-ribose 1-phosphate = D-ribose 5-phosphate. The protein operates within carbohydrate degradation; 2-deoxy-D-ribose 1-phosphate degradation; D-glyceraldehyde 3-phosphate and acetaldehyde from 2-deoxy-alpha-D-ribose 1-phosphate: step 1/2. Functionally, isomerase that catalyzes the conversion of deoxy-ribose 1-phosphate (dRib-1-P) and ribose 1-phosphate (Rib-1-P) to deoxy-ribose 5-phosphate (dRib-5-P) and ribose 5-phosphate (Rib-5-P), respectively. This Clostridium acetobutylicum (strain ATCC 824 / DSM 792 / JCM 1419 / IAM 19013 / LMG 5710 / NBRC 13948 / NRRL B-527 / VKM B-1787 / 2291 / W) protein is Phosphopentomutase.